Here is a 277-residue protein sequence, read N- to C-terminus: Tetrahydroxynaphthalene reductase PfmaG (277 aa).

The NADP(+) site is built by Ile-36, Asp-82, and Asn-109. Active-site proton donor residues include Ser-158, Ser-159, and Tyr-173. Tyr-173, Lys-177, Ile-206, and Thr-208 together coordinate NADP(+). The Lowers pKa of active site Tyr role is filled by Lys-177.

Belongs to the short-chain dehydrogenases/reductases (SDR) family.

The enzyme catalyses scytalone + NADP(+) = naphthalene-1,3,6,8-tetrol + NADPH + H(+). It functions in the pathway pigment biosynthesis; melanin biosynthesis. In terms of biological role, tetrahydroxynaphthalene reductase; part of the gene cluster that mediates the biosynthesis of dihydroxynaphthalene (DHN)-melanin, a bluish-green pigment forming a dark layer in the conidial wall that protects the conidia from UV radiations. The first step of the pathway is the production of the pentaketide 1,3,6,8-tetrahydroxynaphthalene (1,3,6,8-THN or T4HN) by the polyketide synthase PfmaE though condensation of acetyl-CoA with malonyl-CoA. T4HN is not stable and easily oxidizes into the stable form flaviolin. T4HN is also substrate of the hydroxynaphthalene reductase PfmaG to yield scytalone. The scytalone dehydratase PfmaJ then reduces scytalone to 1,3,8-THN. 1,3,8-THN is then substrate of the hydroxynaphthalene reductase PfmaI to yield vermelone. Vermelone is further converted by the multicopper oxidase PfmaD to 1,8-DHN. Finally the laccase PFICI_06862 transforms 1,8-DHN to DHN-melanin. The roles of the 5-oxoprolinase PfmaA and the proline iminopeptidase PfmaB within the cluster have not been elucidated yet. This Pestalotiopsis fici (strain W106-1 / CGMCC3.15140) protein is Tetrahydroxynaphthalene reductase PfmaG.